The following is a 129-amino-acid chain: Lysozyme C (129 aa).

The region spanning 1-129 is the C-type lysozyme domain; that stretch reads KVYGRCELAA…VNAWTRGCRL (129 aa). Cystine bridges form between cysteine 6–cysteine 127, cysteine 30–cysteine 115, cysteine 64–cysteine 80, and cysteine 76–cysteine 94. Residues glutamate 35 and aspartate 52 contribute to the active site.

Belongs to the glycosyl hydrolase 22 family. In terms of assembly, monomer.

It localises to the secreted. The catalysed reaction is Hydrolysis of (1-&gt;4)-beta-linkages between N-acetylmuramic acid and N-acetyl-D-glucosamine residues in a peptidoglycan and between N-acetyl-D-glucosamine residues in chitodextrins.. Its function is as follows. Lysozymes have primarily a bacteriolytic function; those in tissues and body fluids are associated with the monocyte-macrophage system and enhance the activity of immunoagents. In Syrmaticus soemmerringii (Copper pheasant), this protein is Lysozyme C (LYZ).